The following is a 221-amino-acid chain: Probable septum site-determining protein MinC (221 aa).

It belongs to the MinC family. Interacts with MinD and FtsZ.

In terms of biological role, cell division inhibitor that blocks the formation of polar Z ring septums. Rapidly oscillates between the poles of the cell to destabilize FtsZ filaments that have formed before they mature into polar Z rings. Prevents FtsZ polymerization. In Shewanella baltica (strain OS223), this protein is Probable septum site-determining protein MinC.